We begin with the raw amino-acid sequence, 201 residues long: MSYVPIVIEPTSRGERAYDIYSRLLKERIIFVCSTVEDHMANLIVAQLLFLEAENPKKDIYMYINSPGGVVTAGLAIYDTMQYIKPKVATLCIGQACSMGSLLLCGGEKGMRYSLPHSRIMIHQPSGGYKGQATDIEIHAQETLKIKRLLNELYSKHTEQELKHIEKSMERDNFMSPEEAKKFGLVDNIMSSRDAMALLAK.

Catalysis depends on S98, which acts as the Nucleophile. H123 is an active-site residue.

The protein belongs to the peptidase S14 family. In terms of assembly, fourteen ClpP subunits assemble into 2 heptameric rings which stack back to back to give a disk-like structure with a central cavity, resembling the structure of eukaryotic proteasomes.

The protein resides in the cytoplasm. The enzyme catalyses Hydrolysis of proteins to small peptides in the presence of ATP and magnesium. alpha-casein is the usual test substrate. In the absence of ATP, only oligopeptides shorter than five residues are hydrolyzed (such as succinyl-Leu-Tyr-|-NHMec, and Leu-Tyr-Leu-|-Tyr-Trp, in which cleavage of the -Tyr-|-Leu- and -Tyr-|-Trp bonds also occurs).. Its function is as follows. Cleaves peptides in various proteins in a process that requires ATP hydrolysis. Has a chymotrypsin-like activity. Plays a major role in the degradation of misfolded proteins. The chain is ATP-dependent Clp protease proteolytic subunit from Rickettsia conorii (strain ATCC VR-613 / Malish 7).